The chain runs to 191 residues: Probable protein-S-isoprenylcysteine O-methyltransferase (191 aa).

The next 3 helical transmembrane spans lie at 8–28 (WLFAAALVIFHGSEYVLAAAF), 45–65 (YVLAMSFAMLEHLTEALLFPE), and 66–86 (LKEYWFVSYVGLVMVIIGEVI). Residues 110–113 (HKLI), Tyr-118, and 123–126 (HPGY) contribute to the S-adenosyl-L-methionine site. Residues 129-149 (FLIWAVGTQVMLCNPLSTVAF) traverse the membrane as a helical segment. Arg-160 is a substrate binding site. Residue Glu-164 coordinates S-adenosyl-L-methionine.

The protein belongs to the class VI-like SAM-binding methyltransferase superfamily. Isoprenylcysteine carboxyl methyltransferase family. The cofactor is Zn(2+).

The protein resides in the endoplasmic reticulum membrane. It carries out the reaction [protein]-C-terminal S-[(2E,6E)-farnesyl]-L-cysteine + S-adenosyl-L-methionine = [protein]-C-terminal S-[(2E,6E)-farnesyl]-L-cysteine methyl ester + S-adenosyl-L-homocysteine. Catalyzes the post-translational methylation of isoprenylated C-terminal cysteine residues. Carboxyl methylation is a reversible and potentially regulated step in the post-translational modification of prenylated proteins. The chain is Probable protein-S-isoprenylcysteine O-methyltransferase (ICMT) from Oryza sativa subsp. indica (Rice).